Consider the following 322-residue polypeptide: Cytochrome f (322 aa).

Positions methionine 1 to alanine 37 are cleaved as a signal peptide. Heme is bound by residues tyrosine 38, cysteine 58, cysteine 61, and histidine 62. Residues valine 285–leucine 307 traverse the membrane as a helical segment.

This sequence belongs to the cytochrome f family. In terms of assembly, the 4 large subunits of the cytochrome b6-f complex are cytochrome b6, subunit IV (17 kDa polypeptide, petD), cytochrome f and the Rieske protein, while the 4 small subunits are PetG, PetL, PetM and PetN. The complex functions as a dimer. Heme is required as a cofactor.

It is found in the plastid. Its subcellular location is the chloroplast thylakoid membrane. Its function is as follows. Component of the cytochrome b6-f complex, which mediates electron transfer between photosystem II (PSII) and photosystem I (PSI), cyclic electron flow around PSI, and state transitions. The sequence is that of Cytochrome f (petA) from Anthoceros angustus (Hornwort).